The sequence spans 227 residues: Cytochrome c oxidase subunit 2 (227 aa).

Residues 1–14 (MAYPVQLGFQDAAS) are Mitochondrial intermembrane-facing. The helical transmembrane segment at 15–45 (PIMEELLYFHDHTLMIMFLISSLVLYIISLM) threads the bilayer. Topologically, residues 46–59 (LTTELMHTNTMDAQ) are mitochondrial matrix. Residues 60–87 (EVETVWTILPAAILILIALPSLRILYMM) traverse the membrane as a helical segment. Over 88–227 (DEITTPSLTL…HFEEWLLSML (140 aa)) the chain is Mitochondrial intermembrane. Positions 161, 196, 198, 200, 204, and 207 each coordinate Cu cation. E198 lines the Mg(2+) pocket.

This sequence belongs to the cytochrome c oxidase subunit 2 family. In terms of assembly, component of the cytochrome c oxidase (complex IV, CIV), a multisubunit enzyme composed of 14 subunits. The complex is composed of a catalytic core of 3 subunits MT-CO1, MT-CO2 and MT-CO3, encoded in the mitochondrial DNA, and 11 supernumerary subunits COX4I, COX5A, COX5B, COX6A, COX6B, COX6C, COX7A, COX7B, COX7C, COX8 and NDUFA4, which are encoded in the nuclear genome. The complex exists as a monomer or a dimer and forms supercomplexes (SCs) in the inner mitochondrial membrane with NADH-ubiquinone oxidoreductase (complex I, CI) and ubiquinol-cytochrome c oxidoreductase (cytochrome b-c1 complex, complex III, CIII), resulting in different assemblies (supercomplex SCI(1)III(2)IV(1) and megacomplex MCI(2)III(2)IV(2)). Found in a complex with TMEM177, COA6, COX18, COX20, SCO1 and SCO2. Interacts with TMEM177 in a COX20-dependent manner. Interacts with COX20. Interacts with COX16. Cu cation serves as cofactor.

The protein resides in the mitochondrion inner membrane. It carries out the reaction 4 Fe(II)-[cytochrome c] + O2 + 8 H(+)(in) = 4 Fe(III)-[cytochrome c] + 2 H2O + 4 H(+)(out). In terms of biological role, component of the cytochrome c oxidase, the last enzyme in the mitochondrial electron transport chain which drives oxidative phosphorylation. The respiratory chain contains 3 multisubunit complexes succinate dehydrogenase (complex II, CII), ubiquinol-cytochrome c oxidoreductase (cytochrome b-c1 complex, complex III, CIII) and cytochrome c oxidase (complex IV, CIV), that cooperate to transfer electrons derived from NADH and succinate to molecular oxygen, creating an electrochemical gradient over the inner membrane that drives transmembrane transport and the ATP synthase. Cytochrome c oxidase is the component of the respiratory chain that catalyzes the reduction of oxygen to water. Electrons originating from reduced cytochrome c in the intermembrane space (IMS) are transferred via the dinuclear copper A center (CU(A)) of subunit 2 and heme A of subunit 1 to the active site in subunit 1, a binuclear center (BNC) formed by heme A3 and copper B (CU(B)). The BNC reduces molecular oxygen to 2 water molecules using 4 electrons from cytochrome c in the IMS and 4 protons from the mitochondrial matrix. The chain is Cytochrome c oxidase subunit 2 (MT-CO2) from Hapalemur griseus (Gray gentle lemur).